Reading from the N-terminus, the 390-residue chain is Tuftelin (390 aa).

Coiled coils occupy residues 88-126 (DKMI…KLDR) and 162-351 (DTCI…IEKQ). The disordered stretch occupies residues 358–390 (STQARAKTENPGSIRISKPPSPKPMPVIRVVET).

The protein belongs to the tuftelin family. Interacts with TFIP11. In terms of tissue distribution, expressed in the epidermis (at protein level). Present in the extracellular enamel and is mainly associated with the crystal component.

The protein localises to the secreted. Functionally, involved in the structural organization of the epidermis. Involved in the mineralization and structural organization of enamel. This Homo sapiens (Human) protein is Tuftelin (TUFT1).